Here is a 1196-residue protein sequence, read N- to C-terminus: Jouberin (1196 aa).

The stretch at 13-45 (KVRFEELLKTHSDLMREKKKLKKKLVRSEENIS) forms a coiled coil. Serine 45 is modified (phosphoserine). 3 disordered regions span residues 56 to 186 (MKET…EEDE), 215 to 242 (QLTY…KEVP), and 254 to 327 (ISGD…HEIT). The span at 80–91 (DDVSAANTNNLK) shows a compositional bias: polar residues. Residues 92-101 (KSTRVTKNKL) are compositionally biased toward basic residues. The segment covering 102–113 (RNTQLATENPNG) has biased composition (polar residues). 3 stretches are compositionally biased toward basic and acidic residues: residues 141-154 (LKPE…DSTH), 166-179 (DHQK…GREE), and 224-233 (LFHDDKLSSE). Residues 141–434 (LKPETPENKV…VFNENFPYLL (294 aa)) are interaction with HAP1. Basic residues predominate over residues 300-309 (KPKKTKKKTK). 7 WD repeats span residues 607 to 649 (AGER…FMRE), 652 to 691 (GHLN…TNTF), 695 to 735 (PHPS…DSAI), 742 to 781 (VHKS…NDLE), 797 to 837 (EFKG…ARKF), 841 to 880 (ANYR…QVAM), and 885 to 926 (PFKS…AQQE). Serine 1002 carries the post-translational modification Phosphoserine. Positions 1051–1111 (DTAPTVVALY…PANHVASETL (61 aa)) constitute an SH3 domain. Residues 1115-1196 (LPPEIKERSP…QAGRKVTLIE (82 aa)) form a disordered region. Basic and acidic residues-rich tracts occupy residues 1117–1136 (PEIK…KIEK) and 1161–1182 (THSE…DTRM). Position 1123 is a phosphoserine (serine 1123).

In terms of assembly, self-associates. Part of the tectonic-like complex (also named B9 complex). Interacts with MKS1. Interacts with NPHP1; probably as heterodimers and/or AHI1(2):NPHP1(2) heterotetramers. Interacts (via SH3 domain) with the dynamin GTPase DNM2. Interacts with HAP1; probably as AHI1(2):HAP1(2) heterotetramers. Interacts with RAB8A. Interacts with CEND1. Interacts with CTNNB1/beta-catenin. Interacts with SPATA7. In terms of tissue distribution, highly expressed in the most primitive normal hematopoietic cells. Expressed in brain, particularly in neurons that give rise to the crossing axons of the corticospinal tract and superior cerebellar peduncles. Expressed in kidney (renal collecting duct cells) (at protein level).

The protein localises to the cytoplasm. It localises to the cytoskeleton. It is found in the cilium basal body. The protein resides in the cell junction. Its subcellular location is the adherens junction. The protein localises to the microtubule organizing center. It localises to the centrosome. It is found in the centriole. In terms of biological role, involved in vesicle trafficking and required for ciliogenesis, formation of primary non-motile cilium, and recruitment of RAB8A to the basal body of primary cilium. Component of the tectonic-like complex, a complex localized at the transition zone of primary cilia and acting as a barrier that prevents diffusion of transmembrane proteins between the cilia and plasma membranes. Involved in neuronal differentiation. As a positive modulator of classical Wnt signaling, may play a crucial role in ciliary signaling during cerebellum embryonic development. This chain is Jouberin (AHI1), found in Homo sapiens (Human).